A 313-amino-acid chain; its full sequence is NF-kappa-B inhibitor delta (313 aa).

ANK repeat units lie at residues 48-83, 84-113, 117-146, 152-201, 206-236, and 243-276; these read EGDT…IREH, KGKT…EPNA, QGRS…QVDL, EGLT…NHTS, SNKT…DLRT, and HGNT…DPTL.

The protein belongs to the NF-kappa-B inhibitor family. Interacts with NFKB1, RELA and RELB; in the nucleus.

The protein localises to the nucleus. Regulates the expression of IL-2, IL-6, and other cytokines through regulation on NF-kappa-B activity. Functions in the regulation of inflammatory responses. Involved in the induction of T helper 17 cells (Th17) differentiation upon recognition of antigen by T cell antigen receptor (TCR). May also regulate TCR-induced negative selection of thymocytes. The sequence is that of NF-kappa-B inhibitor delta (NFKBID) from Homo sapiens (Human).